The chain runs to 1671 residues: AF4/FMR2 family member lilli (1671 aa).

Disordered stretches follow at residues 53–79 (YSQNYNMEEYERRKRREREKIERQQGI), 126–304 (SAPG…EKDV), 393–599 (LAGE…SNKW), 723–761 (DSGTSASGSSSSSSSSSDSAVGGEVVPMPGPGETFQLPG), 774–1162 (PTQS…TTPH), and 1185–1311 (KLTP…LQIG). Residues 70–79 (REKIERQQGI) are compositionally biased toward basic and acidic residues. Composition is skewed to low complexity over residues 145–179 (SLGHSPSSASSAAGPTSASATTALPGQQQHYQQQQ) and 210–242 (PSSSGMAPPRGPPRSSSSNSNSSSATNNASSGG). Residue T416 is modified to Phosphothreonine. Basic and acidic residues predominate over residues 424-437 (LKTEKNHSLEKQDS). Acidic residues predominate over residues 439 to 450 (LENDLELSESED). Phosphoserine occurs at positions 446 and 448. The span at 459–479 (SAGNSSNSSESDSSESGSESS) shows a compositional bias: low complexity. Over residues 487 to 496 (HPNHQQHHHQ) the composition is skewed to basic residues. Low complexity-rich tracts occupy residues 497–522 (LQQQQQASMQQQQVLQQQQQHRPQPL) and 561–587 (PAGVNSSAVMGAGSVSGGTLSSGGSSS). A compositionally biased stretch (polar residues) spans 588-599 (NKTPSPTESNKW). Over residues 723 to 755 (DSGTSASGSSSSSSSSSDSAVGGEVVPMPGPGE) the composition is skewed to low complexity. A compositionally biased stretch (polar residues) spans 774–786 (PTQSQKAPPSNSV). Basic residues predominate over residues 800-810 (QRQKKPRKKKA). Phosphoserine is present on residues S819 and S820. The segment at residues 849–861 (KKGRGRPRKQQQS) is a DNA-binding region (a.T hook). The segment covering 858–896 (QQQSGGSGNLSSASAGSSSQTKGPTLTAAKKPLAKTPLA) has biased composition (low complexity). S869 and S871 each carry phosphoserine. A compositionally biased stretch (polar residues) spans 907-917 (SQSSSNGNTPT). Composition is skewed to low complexity over residues 947 to 963 (SSSAESSSKSSSSSSSS) and 988 to 1002 (ALLGSGSSSASSSGS). Residues 1009 to 1020 (SRSQVGSGQALA) are compositionally biased toward polar residues. Residues 1032–1058 (SQHSQHLSSSECSSSSGGCTAVCSSSS) show a composition bias toward low complexity. Over residues 1063–1080 (EGRREKERERKPKSDKNK) the composition is skewed to basic and acidic residues. Pro residues predominate over residues 1120–1130 (QPPPPHAPPAA). Over residues 1188–1203 (PAQQNGHLTPKDQATN) the composition is skewed to polar residues. Composition is skewed to basic and acidic residues over residues 1224–1241 (EHPVKPEPELDAGYEAKF) and 1250–1280 (FQLKQERDRDRERERERERERERDREREQPP). S1360 is modified (phosphoserine). At T1362 the chain carries Phosphothreonine. Residues 1562–1581 (NTPSSISPSNSVGSQGSGSN) show a composition bias toward low complexity. The tract at residues 1562–1586 (NTPSSISPSNSVGSQGSGSNTPPGR) is disordered.

It belongs to the AF4 family.

The protein resides in the nucleus. In terms of biological role, has a role in transcriptional regulation. Acts in parallel with the Ras/MAPK and the PI3K/PKB pathways in the control of cell identity and cellular growth. Essential for regulation of the cytoskeleton and cell growth but not for cell proliferation or growth rate. Required specifically for the microtubule-based basal transport of lipid droplets. Plays a partially redundant function downstream of Raf in cell fate specification in the developing eye. Pair-rule protein that regulates embryonic cellularization, gastrulation and segmentation. In Drosophila yakuba (Fruit fly), this protein is AF4/FMR2 family member lilli.